The sequence spans 986 residues: Bifunctional glutamine synthetase adenylyltransferase/adenylyl-removing enzyme (986 aa).

The tract at residues 1-475 (MSFPLAHVDA…VFDHLIGEEK (475 aa)) is adenylyl removase. Residues 481-986 (TETLWHDFLE…LFEHNDKYEE (506 aa)) are adenylyl transferase.

This sequence belongs to the GlnE family. Mg(2+) is required as a cofactor.

The enzyme catalyses [glutamine synthetase]-O(4)-(5'-adenylyl)-L-tyrosine + phosphate = [glutamine synthetase]-L-tyrosine + ADP. It carries out the reaction [glutamine synthetase]-L-tyrosine + ATP = [glutamine synthetase]-O(4)-(5'-adenylyl)-L-tyrosine + diphosphate. Functionally, involved in the regulation of glutamine synthetase GlnA, a key enzyme in the process to assimilate ammonia. When cellular nitrogen levels are high, the C-terminal adenylyl transferase (AT) inactivates GlnA by covalent transfer of an adenylyl group from ATP to specific tyrosine residue of GlnA, thus reducing its activity. Conversely, when nitrogen levels are low, the N-terminal adenylyl removase (AR) activates GlnA by removing the adenylyl group by phosphorolysis, increasing its activity. The regulatory region of GlnE binds the signal transduction protein PII (GlnB) which indicates the nitrogen status of the cell. In Pasteurella multocida (strain Pm70), this protein is Bifunctional glutamine synthetase adenylyltransferase/adenylyl-removing enzyme.